A 1149-amino-acid polypeptide reads, in one-letter code: cGMP-specific 3',5'-cyclic phosphodiesterase (1149 aa).

Composition is skewed to low complexity over residues 1-19 (MHGTVSRSSSSSNMTDVSS) and 31-47 (ATSSSTAATTSASASSS). Residues 1–175 (MHGTVSRSSS…STTASQQDVD (175 aa)) form a disordered region. Positions 48–59 (KPLTNGANKTAI) are enriched in polar residues. Low complexity predominate over residues 60 to 85 (STAAGVTPGAAPGPGCAAIPASGSSG). Residues 96 to 108 (QSNNNRPAGSNRS) are compositionally biased toward polar residues. Over residues 132–158 (SSSSPSQSPSQSQSQSQASIQTQTSQQ) the composition is skewed to low complexity. 2 GAF domains span residues 278–430 (DIDV…GIGI) and 462–643 (NLEC…GLGI). The PDEase domain maps to 673 to 996 (SQDQTEKLTQ…RNWQDLAEKV (324 aa)). Catalysis depends on histidine 749, which acts as the Proton donor. Positions 753, 789, 790, and 900 each coordinate a divalent metal cation. Disordered stretches follow at residues 1037–1066 (QQSQHGSEDSHTPEHQRSGSRLSMKKTGAL) and 1096–1149 (SHVS…CALL). 2 stretches are compositionally biased toward basic and acidic residues: residues 1042–1053 (GSEDSHTPEHQR) and 1096–1106 (SHVSEDMDDKS). Residues 1115–1135 (ASGSMGRMSASSSTSSAGGQM) are compositionally biased toward low complexity. Over residues 1139–1149 (SKKRSKLCALL) the composition is skewed to basic residues. Residue cysteine 1146 is modified to Cysteine methyl ester. The S-farnesyl cysteine moiety is linked to residue cysteine 1146. Residues 1147–1149 (ALL) constitute a propeptide, removed in mature form.

This sequence belongs to the cyclic nucleotide phosphodiesterase family. As to quaternary structure, interacts with PrBP. A divalent metal cation is required as a cofactor.

It localises to the cell membrane. It carries out the reaction 3',5'-cyclic GMP + H2O = GMP + H(+). Its function is as follows. Has a role regulating cGMP transport in Malpighian tubule principal cells. This Drosophila yakuba (Fruit fly) protein is cGMP-specific 3',5'-cyclic phosphodiesterase.